Consider the following 221-residue polypeptide: Adenylate kinase (221 aa).

10–15 (GAGKGT) lines the ATP pocket. The NMP stretch occupies residues 30-59 (STGDMLRAAVKAGTPLGLEAKRYMDAGELV). AMP contacts are provided by residues Thr-31, Arg-36, 57–59 (ELV), 85–88 (GFPR), and Gln-92. Residues 122 to 159 (GRRMHPASGRTYHVKFNPPKVEGVDDVTGEPLIQRDDD) form an LID region. ATP is bound by residues Arg-123 and 132–133 (TY). The AMP site is built by Arg-156 and Arg-167. Gly-207 is an ATP binding site.

This sequence belongs to the adenylate kinase family. As to quaternary structure, monomer.

The protein resides in the cytoplasm. It catalyses the reaction AMP + ATP = 2 ADP. It participates in purine metabolism; AMP biosynthesis via salvage pathway; AMP from ADP: step 1/1. Catalyzes the reversible transfer of the terminal phosphate group between ATP and AMP. Plays an important role in cellular energy homeostasis and in adenine nucleotide metabolism. The polypeptide is Adenylate kinase (Paraburkholderia phymatum (strain DSM 17167 / CIP 108236 / LMG 21445 / STM815) (Burkholderia phymatum)).